A 258-amino-acid polypeptide reads, in one-letter code: tRNA pseudouridine synthase A (258 aa).

Aspartate 61 serves as the catalytic Nucleophile. Tyrosine 119 lines the substrate pocket.

Belongs to the tRNA pseudouridine synthase TruA family. As to quaternary structure, homodimer.

It carries out the reaction uridine(38/39/40) in tRNA = pseudouridine(38/39/40) in tRNA. Formation of pseudouridine at positions 38, 39 and 40 in the anticodon stem and loop of transfer RNAs. In Chlorobium phaeobacteroides (strain DSM 266 / SMG 266 / 2430), this protein is tRNA pseudouridine synthase A.